The sequence spans 557 residues: Dihydroxy-acid dehydratase (557 aa).

Cysteine 50 serves as a coordination point for [2Fe-2S] cluster. Aspartate 82 serves as a coordination point for Mg(2+). Cysteine 123 contacts [2Fe-2S] cluster. Residues aspartate 124 and lysine 125 each coordinate Mg(2+). At lysine 125 the chain carries N6-carboxylysine. Cysteine 195 is a [2Fe-2S] cluster binding site. Residue glutamate 447 participates in Mg(2+) binding. Serine 473 functions as the Proton acceptor in the catalytic mechanism.

Belongs to the IlvD/Edd family. In terms of assembly, homodimer. The cofactor is [2Fe-2S] cluster. Mg(2+) is required as a cofactor.

It catalyses the reaction (2R)-2,3-dihydroxy-3-methylbutanoate = 3-methyl-2-oxobutanoate + H2O. It carries out the reaction (2R,3R)-2,3-dihydroxy-3-methylpentanoate = (S)-3-methyl-2-oxopentanoate + H2O. It participates in amino-acid biosynthesis; L-isoleucine biosynthesis; L-isoleucine from 2-oxobutanoate: step 3/4. The protein operates within amino-acid biosynthesis; L-valine biosynthesis; L-valine from pyruvate: step 3/4. In terms of biological role, functions in the biosynthesis of branched-chain amino acids. Catalyzes the dehydration of (2R,3R)-2,3-dihydroxy-3-methylpentanoate (2,3-dihydroxy-3-methylvalerate) into 2-oxo-3-methylpentanoate (2-oxo-3-methylvalerate) and of (2R)-2,3-dihydroxy-3-methylbutanoate (2,3-dihydroxyisovalerate) into 2-oxo-3-methylbutanoate (2-oxoisovalerate), the penultimate precursor to L-isoleucine and L-valine, respectively. This Burkholderia mallei (strain NCTC 10247) protein is Dihydroxy-acid dehydratase.